We begin with the raw amino-acid sequence, 356 residues long: Phosphate acyltransferase (356 aa).

This sequence belongs to the PlsX family. As to quaternary structure, homodimer. Probably interacts with PlsY.

It localises to the cytoplasm. The catalysed reaction is a fatty acyl-[ACP] + phosphate = an acyl phosphate + holo-[ACP]. It functions in the pathway lipid metabolism; phospholipid metabolism. In terms of biological role, catalyzes the reversible formation of acyl-phosphate (acyl-PO(4)) from acyl-[acyl-carrier-protein] (acyl-ACP). This enzyme utilizes acyl-ACP as fatty acyl donor, but not acyl-CoA. This chain is Phosphate acyltransferase, found in Escherichia coli (strain 55989 / EAEC).